The sequence spans 422 residues: Zona pellucida sperm-binding protein 3 (422 aa).

The first 22 residues, 1–22, serve as a signal peptide directing secretion; that stretch reads MGLSYQLLLCLLLCGGAKQCCS. Gln-23 is subject to Pyrrolidone carboxylic acid. The Extracellular segment spans residues 23 to 386; the sequence is QPLWLLPGGT…GWASSAQTSL (364 aa). Thr-32 and Thr-34 each carry an O-linked (GalNAc...) threonine glycan. The 262-residue stretch at 45–306 folds into the ZP domain; sequence ECLEAELVVT…KACSFNRSSK (262 aa). Intrachain disulfides connect Cys-46–Cys-139 and Cys-78–Cys-98. An N-linked (GlcNAc...) asparagine glycan is attached at Asn-146. O-linked (GalNAc...) threonine glycans are attached at residues Thr-155, Thr-161, and Thr-162. 2 cysteine pairs are disulfide-bonded: Cys-216–Cys-281 and Cys-238–Cys-299. Residues Asn-271 and Asn-302 are each glycosylated (N-linked (GlcNAc...) asparagine). Residues 350 to 422 constitute a propeptide, removed in mature form; sequence RRHVRDEADV…TPSHVVSLSQ (73 aa). The chain crosses the membrane as a helical span at residues 387–407; that stretch reads ALGLGLAAVAFLTLAAIVLGV. Residues 408–422 are Cytoplasmic-facing; the sequence is TRSCHTPSHVVSLSQ.

This sequence belongs to the ZP domain family. ZPC subfamily. In terms of assembly, polymers of ZP2 and ZP3 organized into long filaments cross-linked by ZP1 homodimers. Interacts with ZP1 and ZP2. Proteolytically cleaved before the transmembrane segment to yield the secreted ectodomain incorporated in the zona pellucida. In terms of processing, N-glycosylated. Post-translationally, O-glycosylated; removal of O-linked glycans may play an important role in the post-fertilization block to polyspermy. As to expression, expressed in oocytes.

It is found in the zona pellucida. It localises to the cell membrane. Functionally, component of the zona pellucida, an extracellular matrix surrounding oocytes which mediates sperm binding, induction of the acrosome reaction and prevents post-fertilization polyspermy. The zona pellucida is composed of 3 to 4 glycoproteins, ZP1, ZP2, ZP3, and ZP4. ZP3 is essential for sperm binding and zona matrix formation. The chain is Zona pellucida sperm-binding protein 3 (ZP3) from Mesocricetus auratus (Golden hamster).